Consider the following 413-residue polypeptide: Probable tRNA sulfurtransferase (413 aa).

Residues 61-171 (TRVLDRVTRV…EDGTYIFTEK (111 aa)) form the THUMP domain. Residues 189–190 (ML), 214–215 (HF), Arg275, Gly297, and Gln306 contribute to the ATP site.

It belongs to the ThiI family.

The protein localises to the cytoplasm. The enzyme catalyses [ThiI sulfur-carrier protein]-S-sulfanyl-L-cysteine + a uridine in tRNA + 2 reduced [2Fe-2S]-[ferredoxin] + ATP + H(+) = [ThiI sulfur-carrier protein]-L-cysteine + a 4-thiouridine in tRNA + 2 oxidized [2Fe-2S]-[ferredoxin] + AMP + diphosphate. The catalysed reaction is [ThiS sulfur-carrier protein]-C-terminal Gly-Gly-AMP + S-sulfanyl-L-cysteinyl-[cysteine desulfurase] + AH2 = [ThiS sulfur-carrier protein]-C-terminal-Gly-aminoethanethioate + L-cysteinyl-[cysteine desulfurase] + A + AMP + 2 H(+). It participates in cofactor biosynthesis; thiamine diphosphate biosynthesis. Functionally, catalyzes the ATP-dependent transfer of a sulfur to tRNA to produce 4-thiouridine in position 8 of tRNAs, which functions as a near-UV photosensor. Also catalyzes the transfer of sulfur to the sulfur carrier protein ThiS, forming ThiS-thiocarboxylate. This is a step in the synthesis of thiazole, in the thiamine biosynthesis pathway. The sulfur is donated as persulfide by IscS. This Natranaerobius thermophilus (strain ATCC BAA-1301 / DSM 18059 / JW/NM-WN-LF) protein is Probable tRNA sulfurtransferase.